The following is a 176-amino-acid chain: Calponin-1 (176 aa).

Positions 22 to 125 (PQTERQLRVW…STLIALASQA (104 aa)) constitute a Calponin-homology (CH) domain. A Calponin-like repeat occupies 158 to 176 (IGLQMGTNKFASQQGMTAY). A Phosphothreonine; by ROCK2 modification is found at Thr-164. The residue at position 169 (Ser-169) is a Phosphoserine; by ROCK2. Thr-174 carries the post-translational modification Phosphothreonine; by ROCK2.

Belongs to the calponin family. As to expression, smooth muscle, and tissues containing significant amounts of smooth muscle.

Thin filament-associated protein that is implicated in the regulation and modulation of smooth muscle contraction. It is capable of binding to actin, calmodulin and tropomyosin. The interaction of calponin with actin inhibits the actomyosin Mg-ATPase activity. In Meleagris gallopavo (Wild turkey), this protein is Calponin-1 (CNN1).